We begin with the raw amino-acid sequence, 113 residues long: Carboxysome shell protein CcmK1 (113 aa).

A BMC domain is found at 4–90 (AVGMIETLGF…PHENLEYVLP (87 aa)).

This sequence belongs to the bacterial microcompartments protein family. CcmK subfamily. Homohexamer. Interacts preferentially with CcmK2 and CcmK4a rather than itself in vitro.

The protein resides in the carboxysome. Functionally, one of the shell proteins of the carboxysome, a polyhedral inclusion where RuBisCO (ribulose bisphosphate carboxylase, rbcL-rbcS) is sequestered. Assembles into hexamers which make sheets that form the facets of the polyhedral carboxysome. The hexamer central pore probably regulates metabolite flux. The polypeptide is Carboxysome shell protein CcmK1 (Thermosynechococcus vestitus (strain NIES-2133 / IAM M-273 / BP-1)).